Consider the following 397-residue polypeptide: DnaJ homolog subfamily A member 4 (397 aa).

One can recognise a J domain in the interval 4–70 (ETQYYDILGV…RDVYDQGGEQ (67 aa)). S18 bears the Phosphoserine mark. The CR-type zinc finger occupies 122-206 (GVTKKLALQK…CSGAKVIREK (85 aa)). Residues C135, C138, C151, C154, C178, C181, C194, and C197 each contribute to the Zn(2+) site. 4 CXXCXGXG motif repeats span residues 135–142 (CEKCEGVG), 151–158 (CPLCKGRG), 178–185 (CIECKGQG), and 194–201 (CESCSGAK). Cysteine methyl ester is present on C394. C394 carries S-farnesyl cysteine lipidation. Residues 395 to 397 (QTA) constitute a propeptide, removed in mature form.

The protein resides in the membrane. The chain is DnaJ homolog subfamily A member 4 (DNAJA4) from Homo sapiens (Human).